Consider the following 438-residue polypeptide: 2-(3-amino-3-carboxypropyl)histidine synthase subunit 1 (438 aa).

The interval 1 to 24 (MAALVVSETAEPGSRVGPGRGRIS) is disordered. C110, C214, and C342 together coordinate [4Fe-4S] cluster. Positions 402-438 (LCQPASDKVQQGSRGGSPAPACESCNCADQKATSPAP) are disordered. Position 418 is a phosphoserine (S418).

Belongs to the DPH1/DPH2 family. DPH1 subfamily. In terms of assembly, component of the 2-(3-amino-3-carboxypropyl)histidine synthase complex composed of DPH1, DPH2, DPH3 and a NADH-dependent reductase. Interacts with DPH2. Interacts with RBM8A. It depends on [4Fe-4S] cluster as a cofactor. In terms of tissue distribution, strongly expressed in kidney and liver. Moderately expressed in brain, skin and testis. Weakly expressed in heart, lung, small intestine, spleen, stomach and thymus.

The protein resides in the nucleus. It is found in the cytoplasm. The catalysed reaction is L-histidyl-[translation elongation factor 2] + S-adenosyl-L-methionine = 2-[(3S)-amino-3-carboxypropyl]-L-histidyl-[translation elongation factor 2] + S-methyl-5'-thioadenosine + H(+). The protein operates within protein modification; peptidyl-diphthamide biosynthesis. Catalyzes the first step of diphthamide biosynthesis, a post-translational modification of histidine which occurs in elongation factor 2. DPH1 and DPH2 transfer a 3-amino-3-carboxypropyl (ACP) group from S-adenosyl-L-methionine (SAM) to a histidine residue, the reaction is assisted by a reduction system comprising DPH3 and a NADH-dependent reductase. Acts as a tumor suppressor. This chain is 2-(3-amino-3-carboxypropyl)histidine synthase subunit 1, found in Mus musculus (Mouse).